Consider the following 198-residue polypeptide: Transcription factor LBX2 (198 aa).

Disordered stretches follow at residues M24–C46, A63–R89, and D173–D198. Residues R85–V144 constitute a DNA-binding region (homeobox).

The protein localises to the nucleus. Transcription factor. In Homo sapiens (Human), this protein is Transcription factor LBX2 (LBX2).